Consider the following 106-residue polypeptide: MSKLYEWISPDSDVLEQEKTELRPPSMYKVVLNNDDYTPMEFVVEVLDKFFSMDLEKATQLMLTVHYEGKAVCGTFTAEVAETKVAQVNTYSRDNEHPLLCTMEQA.

This sequence belongs to the ClpS family. In terms of assembly, binds to the N-terminal domain of the chaperone ClpA.

Its function is as follows. Involved in the modulation of the specificity of the ClpAP-mediated ATP-dependent protein degradation. This chain is ATP-dependent Clp protease adapter protein ClpS, found in Aliivibrio fischeri (strain ATCC 700601 / ES114) (Vibrio fischeri).